The following is a 96-amino-acid chain: ESAT-6-like protein EsxH (96 aa).

4 residues coordinate Zn(2+): His14, His70, His76, and Glu77.

Belongs to the WXG100 family. ESAT-6 subfamily. As to quaternary structure, forms a tight 1:1 complex with EsxG. When it is complexed to EsxG, interacts directly with host HGS/HRS.

It is found in the secreted. EsxH, in complex with EsxG, disrupts ESCRT function and impairs host phagosome maturation, thereby promoting intracellular bacterial growth. The complex acts by interacting, via EsxH, with the host hepatocyte growth factor-regulated tyrosine kinase substrate (HGS/HRS), a component of the ESCRT machinery. The sequence is that of ESAT-6-like protein EsxH from Mycobacterium tuberculosis (strain ATCC 25618 / H37Rv).